The chain runs to 416 residues: Floricaula/leafy homolog 2 (416 aa).

The interval 154–237 (EGLSEEPVQQ…DASGGISERQ (84 aa)) is disordered. Residues 210-225 (AEEDEETEEGQEDDWN) are compositionally biased toward acidic residues. DNA-binding regions lie at residues 238-242 (REHPF), 307-314 (NKPKMRHY), and 378-381 (YVPT).

Belongs to the FLO/LFY family. In terms of tissue distribution, expressed in floral meristems and in indeterminate vegetative meristems.

Its subcellular location is the nucleus. Functionally, probable transcription factor that act to specify determinacy in the progenitor cells for both flowers and leaves. The polypeptide is Floricaula/leafy homolog 2 (FL2) (Nicotiana tabacum (Common tobacco)).